The sequence spans 116 residues: Ribonuclease P protein component (116 aa).

The protein belongs to the RnpA family. In terms of assembly, consists of a catalytic RNA component (M1 or rnpB) and a protein subunit.

It catalyses the reaction Endonucleolytic cleavage of RNA, removing 5'-extranucleotides from tRNA precursor.. Its function is as follows. RNaseP catalyzes the removal of the 5'-leader sequence from pre-tRNA to produce the mature 5'-terminus. It can also cleave other RNA substrates such as 4.5S RNA. The protein component plays an auxiliary but essential role in vivo by binding to the 5'-leader sequence and broadening the substrate specificity of the ribozyme. This is Ribonuclease P protein component from Bacillus velezensis (strain DSM 23117 / BGSC 10A6 / LMG 26770 / FZB42) (Bacillus amyloliquefaciens subsp. plantarum).